A 288-amino-acid chain; its full sequence is ATP synthase gamma chain (288 aa).

This sequence belongs to the ATPase gamma chain family. As to quaternary structure, F-type ATPases have 2 components, CF(1) - the catalytic core - and CF(0) - the membrane proton channel. CF(1) has five subunits: alpha(3), beta(3), gamma(1), delta(1), epsilon(1). CF(0) has three main subunits: a, b and c.

The protein resides in the cell inner membrane. Produces ATP from ADP in the presence of a proton gradient across the membrane. The gamma chain is believed to be important in regulating ATPase activity and the flow of protons through the CF(0) complex. In Aliivibrio salmonicida (strain LFI1238) (Vibrio salmonicida (strain LFI1238)), this protein is ATP synthase gamma chain.